The sequence spans 194 residues: UPF0215 protein Mbar_A0619 (194 aa).

The protein belongs to the UPF0215 family.

The polypeptide is UPF0215 protein Mbar_A0619 (Methanosarcina barkeri (strain Fusaro / DSM 804)).